The sequence spans 597 residues: Arginine--tRNA ligase (597 aa).

Low complexity predominate over residues 23–32 (QAAAARQASQ). Residues 23-43 (QAAAARQASQPLDPQLAPASK) are disordered. Residues 137-147 (PNIAKEMHVGH) carry the 'HIGH' region motif.

It belongs to the class-I aminoacyl-tRNA synthetase family. Monomer.

The protein localises to the cytoplasm. The catalysed reaction is tRNA(Arg) + L-arginine + ATP = L-arginyl-tRNA(Arg) + AMP + diphosphate. This chain is Arginine--tRNA ligase, found in Synechococcus sp. (strain WH7803).